The chain runs to 189 residues: Flavin prenyltransferase UbiX (189 aa).

FMN contacts are provided by residues 10–12, Ser37, 88–91, and Arg123; these read GAS and SIKT. Dimethylallyl phosphate contacts are provided by Tyr153 and Arg169.

It belongs to the UbiX/PAD1 family.

The enzyme catalyses dimethylallyl phosphate + FMNH2 = prenylated FMNH2 + phosphate. Its pathway is cofactor biosynthesis; ubiquinone biosynthesis. Functionally, flavin prenyltransferase that catalyzes the synthesis of the prenylated FMN cofactor (prenyl-FMN) for 4-hydroxy-3-polyprenylbenzoic acid decarboxylase UbiD. The prenyltransferase is metal-independent and links a dimethylallyl moiety from dimethylallyl monophosphate (DMAP) to the flavin N5 and C6 atoms of FMN. The sequence is that of Flavin prenyltransferase UbiX from Salmonella typhi.